The primary structure comprises 474 residues: MGTIDIITSPTPIHILAFPFPAKGHINPLLHLCNRLASKGFKITLITTVSTLKSVKTSKANGIDIESIPDGIPQEQNHQIITVMEMNMELYFKQFKASAIENTTKLIQKLKTKNPPPKVLIYDSSMPWILEVAHEQGLLGASFFTQPCSVSAIYYHMLQGTIKLPLENSENGMVSLPYLPLLEKKDLPGVQQFEDNSEALAELLADQFSNIDDVDYVLFNTFDALEIEVVNWMGSKWPILTVGPTAPTSMFLLDKKQKNYEDGRSINYLFETNTEVCMKWLDQREIDTVIYVSFGSLASLTEEQMEQVSQALIRSNCYFLWVVREEEENKLPKDFKETTSKKKGLVINWCPQLDVLAHKSVACFMTHCGWNSTLEALCSGVPMICMPQWADQTTNAKLIEHVWKIGVGVNKSDENGIVKREDIEDCIRQVIESERGKELKRNAIKWKELAKEAVSEGGSSYNNIQEFSSSLLFN.

Residues Ser296, Trp349–Cys350, His367–Glu375, and Trp389–Gln392 each bind UDP-alpha-D-glucose.

Belongs to the UDP-glycosyltransferase family.

The chain is UDP glycosyltransferase 9 from Catharanthus roseus (Madagascar periwinkle).